A 174-amino-acid chain; its full sequence is Adenine phosphoribosyltransferase (174 aa).

Belongs to the purine/pyrimidine phosphoribosyltransferase family. Homodimer.

It localises to the cytoplasm. It carries out the reaction AMP + diphosphate = 5-phospho-alpha-D-ribose 1-diphosphate + adenine. Its pathway is purine metabolism; AMP biosynthesis via salvage pathway; AMP from adenine: step 1/1. In terms of biological role, catalyzes a salvage reaction resulting in the formation of AMP, that is energically less costly than de novo synthesis. This chain is Adenine phosphoribosyltransferase, found in Dichelobacter nodosus (strain VCS1703A).